We begin with the raw amino-acid sequence, 503 residues long: L-amino-acid oxidase (503 aa).

Residues 1–18 (MNVFFMFSLLFLAALGSC) form the signal peptide. C28 and C191 are oxidised to a cystine. FAD-binding positions include 61 to 62 (MS), 81 to 82 (EA), R89, and 105 to 108 (GPMR). R108 provides a ligand contact to substrate. An N-linked (GlcNAc...) asparagine glycan is attached at N190. H241 provides a ligand contact to substrate. Residue V279 coordinates FAD. A disulfide bridge links C349 with C430. Residue Y390 participates in substrate binding. Residues E475 and 482 to 487 (GWIDST) each bind FAD. 482–483 (GW) contributes to the substrate binding site.

This sequence belongs to the flavin monoamine oxidase family. FIG1 subfamily. In terms of assembly, homodimer; non-covalently linked. Requires FAD as cofactor. Post-translationally, N-glycosylated. The enzymatic activity is not affected by deglycosylation. As to expression, expressed by the venom gland.

The protein resides in the secreted. The catalysed reaction is an L-alpha-amino acid + O2 + H2O = a 2-oxocarboxylate + H2O2 + NH4(+). It carries out the reaction L-leucine + O2 + H2O = 4-methyl-2-oxopentanoate + H2O2 + NH4(+). It catalyses the reaction L-phenylalanine + O2 + H2O = 3-phenylpyruvate + H2O2 + NH4(+). The enzyme catalyses L-methionine + O2 + H2O = 4-methylsulfanyl-2-oxobutanoate + H2O2 + NH4(+). The catalysed reaction is L-isoleucine + O2 + H2O = (S)-3-methyl-2-oxopentanoate + H2O2 + NH4(+). Functionally, catalyzes an oxidative deamination of predominantly hydrophobic and aromatic L-amino acids, thus producing hydrogen peroxide that may contribute to the diverse toxic effects of this enzyme. Is highly active on L-Met, L-Leu, L-Phe and L-Ile. Exhibits diverse biological activities, such as antibacterial on both Gram-positive and Gram-negative bacteria and antiparasitic activities, as well as induction of platelet aggregation. Effects of snake L-amino oxidases on platelets are controversial, since they either induce aggregation or inhibit agonist-induced aggregation. These different effects are probably due to different experimental conditions. This protein may also have activities in hemorrhage, hemolysis, edema, and apoptosis. The protein is L-amino-acid oxidase of Bothrops pauloensis (Neuwied's lancehead).